The following is an 80-amino-acid chain: uncharacterized protein (80 aa).

The disordered stretch occupies residues 57-80; that stretch reads GNIDSDVSDQDQIGNPSAPISNQI.

This is an uncharacterized protein from Bacillus subtilis (strain 168).